Here is a 523-residue protein sequence, read N- to C-terminus: Ribonuclease Y (523 aa).

The helical transmembrane segment at 7 to 24 (LSSLASALLAGGGTYLVY) threads the bilayer. One can recognise a KH domain in the interval 213 to 279 (LINVVNLPND…TRTIEALVED (67 aa)). Residues 339–432 (ALGHSLEVAN…VCAADALSAA (94 aa)) enclose the HD domain.

It belongs to the RNase Y family.

The protein localises to the cell membrane. In terms of biological role, endoribonuclease that initiates mRNA decay. This is Ribonuclease Y from Wolinella succinogenes (strain ATCC 29543 / DSM 1740 / CCUG 13145 / JCM 31913 / LMG 7466 / NCTC 11488 / FDC 602W) (Vibrio succinogenes).